Consider the following 1728-residue polypeptide: Lysophospholipase NTE1 (1728 aa).

At methionine 1–lysine 44 the chain is on the cytoplasmic side. Residues alanine 45–isoleucine 65 traverse the membrane as a helical segment. Residues serine 66 to histidine 97 lie on the Lumenal side of the membrane. A helical membrane pass occupies residues isoleucine 98–serine 118. Topologically, residues tyrosine 119–isoleucine 1728 are cytoplasmic. The segment covering serine 141 to serine 150 has biased composition (low complexity). Disordered stretches follow at residues serine 141–arginine 167, arginine 285–threonine 368, asparagine 406–serine 436, threonine 454–proline 488, asparagine 596–arginine 660, and alanine 687–phenylalanine 756. Basic and acidic residues predominate over residues leucine 153 to threonine 162. Polar residues-rich tracts occupy residues serine 293–aspartate 303 and methionine 326–proline 336. Acidic residues predominate over residues serine 345–serine 367. 3 stretches are compositionally biased toward polar residues: residues asparagine 406–asparagine 424, threonine 454–isoleucine 479, and lysine 599–leucine 609. Positions threonine 610–glutamine 628 are enriched in low complexity. Polar residues-rich tracts occupy residues glutamate 642–threonine 657 and isoleucine 729–phenylalanine 756. A nucleoside 3',5'-cyclic phosphate-binding positions include serine 854 to leucine 987 and serine 983 to lysine 1121. The tract at residues proline 1034 to aspartate 1055 is disordered. The span at leucine 1036–glutamate 1049 shows a compositional bias: acidic residues. The 165-residue stretch at leucine 1422–lysine 1586 folds into the PNPLA domain. Positions glycine 1426–glycine 1431 match the GXGXXG motif. Positions glycine 1453–glycine 1457 match the GXSXG motif. Catalysis depends on serine 1455, which acts as the Nucleophile. Aspartate 1573 serves as the catalytic Proton acceptor. The DGA/G motif lies at aspartate 1573–glycine 1575.

It belongs to the NTE family.

The protein localises to the endoplasmic reticulum membrane. It catalyses the reaction a 1-acyl-sn-glycero-3-phosphocholine + H2O = sn-glycerol 3-phosphocholine + a fatty acid + H(+). Its activity is regulated as follows. Inhibited by organophosphorus esters. Intracellular phospholipase B that catalyzes the double deacylation of phosphatidylcholine (PC) to glycerophosphocholine (GroPCho). Plays an important role in membrane lipid homeostasis. Responsible for the rapid PC turnover in response to inositol, elevated temperatures, or when choline is present in the growth medium. The polypeptide is Lysophospholipase NTE1 (NTE1) (Candida glabrata (strain ATCC 2001 / BCRC 20586 / JCM 3761 / NBRC 0622 / NRRL Y-65 / CBS 138) (Yeast)).